The following is a 328-amino-acid chain: DNA-directed RNA polymerase subunit alpha (328 aa).

Positions 1 to 234 (MQGSVTEFLK…EQLDAFVDLR (234 aa)) are alpha N-terminal domain (alpha-NTD). The interval 248–328 (FDPILLRPVD…NWPPASIAED (81 aa)) is alpha C-terminal domain (alpha-CTD).

The protein belongs to the RNA polymerase alpha chain family. Homodimer. The RNAP catalytic core consists of 2 alpha, 1 beta, 1 beta' and 1 omega subunit. When a sigma factor is associated with the core the holoenzyme is formed, which can initiate transcription.

It carries out the reaction RNA(n) + a ribonucleoside 5'-triphosphate = RNA(n+1) + diphosphate. In terms of biological role, DNA-dependent RNA polymerase catalyzes the transcription of DNA into RNA using the four ribonucleoside triphosphates as substrates. This Haemophilus influenzae (strain PittEE) protein is DNA-directed RNA polymerase subunit alpha.